The following is a 236-amino-acid chain: EEF1A lysine methyltransferase 2 (236 aa).

Gly residues predominate over residues 1–11 (MSSGADGGGGA). The segment at 1-31 (MSSGADGGGGAAVAARSDKGSPGEDGFVPSA) is disordered. Position 2 is an N-acetylserine (Ser2). Ser21 carries the phosphoserine modification.

The protein belongs to the class I-like SAM-binding methyltransferase superfamily. EFM4 family.

The protein resides in the cytoplasm. It is found in the nucleus. It carries out the reaction L-lysyl-[protein] + 3 S-adenosyl-L-methionine = N(6),N(6),N(6)-trimethyl-L-lysyl-[protein] + 3 S-adenosyl-L-homocysteine + 3 H(+). Functionally, protein-lysine methyltransferase that selectively catalyzes the trimethylation of EEF1A at 'Lys-318'. This Homo sapiens (Human) protein is EEF1A lysine methyltransferase 2.